Here is a 263-residue protein sequence, read N- to C-terminus: tRNA uridine(34) hydroxylase (263 aa).

A Rhodanese domain is found at 129–223; it reads EGREIALLDT…YFEEVGGAHY (95 aa). The active-site Cysteine persulfide intermediate is the Cys-183.

The protein belongs to the TrhO family.

It catalyses the reaction uridine(34) in tRNA + AH2 + O2 = 5-hydroxyuridine(34) in tRNA + A + H2O. In terms of biological role, catalyzes oxygen-dependent 5-hydroxyuridine (ho5U) modification at position 34 in tRNAs. In Variovorax paradoxus (strain S110), this protein is tRNA uridine(34) hydroxylase.